The sequence spans 417 residues: Gamma-glutamyl phosphate reductase (417 aa).

The protein belongs to the gamma-glutamyl phosphate reductase family.

Its subcellular location is the cytoplasm. The catalysed reaction is L-glutamate 5-semialdehyde + phosphate + NADP(+) = L-glutamyl 5-phosphate + NADPH + H(+). The protein operates within amino-acid biosynthesis; L-proline biosynthesis; L-glutamate 5-semialdehyde from L-glutamate: step 2/2. Functionally, catalyzes the NADPH-dependent reduction of L-glutamate 5-phosphate into L-glutamate 5-semialdehyde and phosphate. The product spontaneously undergoes cyclization to form 1-pyrroline-5-carboxylate. The polypeptide is Gamma-glutamyl phosphate reductase (Legionella pneumophila subsp. pneumophila (strain Philadelphia 1 / ATCC 33152 / DSM 7513)).